Consider the following 201-residue polypeptide: MNETNDNDIDQLIYLFSKLPGLGIRSARRIALYLLQDKDIRLKSLINNLVEIDKKIVKCEICGNMDTENMCRICSSEYRDKSIIAIVETVAELWAMERSGNFKGLYHVLGHNLSATSRQNPSILRLPELLTRCFAENIKEVIIATNSTLEGQTTAYFITEYLKEHPAKISRLASGIPIGGELDYLDEGTVSAAINLRQPFE.

The C4-type zinc-finger motif lies at Cys-59–Cys-74. In terms of domain architecture, Toprim spans Ser-82–Pro-177.

Belongs to the RecR family.

Its function is as follows. May play a role in DNA repair. It seems to be involved in an RecBC-independent recombinational process of DNA repair. It may act with RecF and RecO. The chain is Recombination protein RecR from Rickettsia conorii (strain ATCC VR-613 / Malish 7).